The chain runs to 549 residues: Neurofilament light polypeptide (549 aa).

S2 carries the post-translational modification N-acetylserine. The interval 2–92 (SSFYSEPYYS…KSIRTQEKAQ (91 aa)) is head. T21 carries O-linked (GlcNAc) threonine glycosylation. An Asymmetric dimethylarginine; alternate modification is found at R23. R23 bears the Omega-N-methylarginine; alternate mark. S27 carries an O-linked (GlcNAc) serine glycan. Omega-N-methylarginine is present on R30. A Phosphotyrosine modification is found at Y43. Residues S56, S66, and S102 each carry the phosphoserine modification. The IF rod domain occupies 89–400 (EKAQLQDLND…KLLEGEETRL (312 aa)). Positions 93-124 (LQDLNDRFASFIERVHELEQQNKVLEAQLLVL) are coil 1A. The interval 125 to 137 (RQKHSEPSRFRAL) is linker 1. Positions 138-233 (YEQEIRDLRL…KVHEEEIAEL (96 aa)) are coil 1B. The segment at 234 to 252 (QAQIQYAQISVEMDVSSKP) is linker 12. Residues 253-271 (DLSAALKDIRAQYEKLAAK) are coil 2A. The interval 272 to 280 (NMQNAEEWF) is linker 2. Residues 281-396 (KSRFTVLTES…AAYRKLLEGE (116 aa)) form a coil 2B region. The interval 381 to 391 (ALDIEIAAYRK) is epitope; recognized by IF-specific monoclonal antibody. The segment at 397-443 (ETRLSFTSVGSLTTGYSQSSQVFGRSAYGGLQTSSYLMSTRSFPSYY) is tail, subdomain A. The tail stretch occupies residues 397–549 (ETRLSFTSVG…GEEQATKKKD (153 aa)). Residues 444–549 (TSHVQEEQIE…GEEQATKKKD (106 aa)) are tail, subdomain B (acidic). The segment at 462–549 (KAEEAKDEPP…GEEQATKKKD (88 aa)) is disordered. The segment covering 471-534 (PSEGEAEEEG…ETKEAEEEEK (64 aa)) has biased composition (acidic residues). Position 472 is a phosphoserine (S472). A Phosphothreonine modification is found at T526. Residues 535–549 (KDEGAGEEQATKKKD) show a composition bias toward basic and acidic residues.

It belongs to the intermediate filament family. As to quaternary structure, forms homodimers (in vitro). Forms heterodimers with NEFH or NEFM; which can further hetero-oligomerize (in vitro). Forms heterodimers with INA (in vitro). Interacts with ARHGEF28. Interacts with TRIM2. In terms of processing, O-glycosylated. Phosphorylated in the head and rod regions by the PKC kinase PKN1, leading to the inhibition of polymerization. Post-translationally, ubiquitinated in the presence of TRIM2 and UBE2D1.

Its subcellular location is the cell projection. The protein localises to the axon. It localises to the cytoplasm. It is found in the cytoskeleton. Functionally, neurofilaments usually contain three intermediate filament proteins: NEFL, NEFM, and NEFH which are involved in the maintenance of neuronal caliber. May additionally cooperate with the neuronal intermediate filament proteins PRPH and INA to form neuronal filamentous networks. The sequence is that of Neurofilament light polypeptide (NEFL) from Sus scrofa (Pig).